A 160-amino-acid polypeptide reads, in one-letter code: MKSKFIVPVLKPESYLRKILSTPQGILYIGKYPIKDLEAHILVGDIVSNTLRGNIKIIDYKTRRHINIKPIINEPLTNLVNPRGTMSLMSRTIAKAKNYRTIIVKGEEDLVTLAYALENEETSIAYGQPDIGVVIIKSNRLKALRILKTFKPDIVVYNKV.

The GTP site is built by aspartate 45, isoleucine 46, valine 47, aspartate 59, lysine 61, glutamate 108, and aspartate 130.

It belongs to the GTP-dependent DPCK family.

The enzyme catalyses 3'-dephospho-CoA + GTP = GDP + CoA + H(+). The protein operates within cofactor biosynthesis; coenzyme A biosynthesis. Functionally, catalyzes the GTP-dependent phosphorylation of the 3'-hydroxyl group of dephosphocoenzyme A to form coenzyme A (CoA). The protein is GTP-dependent dephospho-CoA kinase of Staphylothermus marinus (strain ATCC 43588 / DSM 3639 / JCM 9404 / F1).